A 640-amino-acid polypeptide reads, in one-letter code: tRNA-dihydrouridine(47) synthase [NAD(P)(+)]-like (640 aa).

Positions 1-10 are enriched in low complexity; the sequence is MAEVAEVAAE. Disordered regions lie at residues 1-22 and 47-106; these read MAEV…VGAC and DKQE…PHMK. Alanine 2 is modified (N-acetylalanine). Residues 64–91 show a composition bias toward basic and acidic residues; the sequence is PEAKRIRLEDGQENGKTEVAVESHERQV. Residues 92–106 are compositionally biased toward basic residues; that stretch reads PKRARGQNKSRPHMK. 2 consecutive C3H1-type zinc fingers follow at residues 110-140 and 148-178; these read YDKE…HDVG and ADLG…HLGP. A Phosphoserine modification is found at serine 267. Residues 301-303 and glutamine 355 contribute to the FMN site; that span reads PLT. Catalysis depends on cysteine 386, which acts as the Proton donor. Lysine 406 is covalently cross-linked (Glycyl lysine isopeptide (Lys-Gly) (interchain with G-Cter in SUMO2)). FMN-binding positions include lysine 425, histidine 455, 487 to 489, and 510 to 511; these read NGD and AR.

The protein belongs to the Dus family. Dus3 subfamily. The cofactor is FMN.

It catalyses the reaction 5,6-dihydrouridine(47) in tRNA + NAD(+) = uridine(47) in tRNA + NADH + H(+). The catalysed reaction is 5,6-dihydrouridine(47) in tRNA + NADP(+) = uridine(47) in tRNA + NADPH + H(+). The enzyme catalyses a 5,6-dihydrouridine in mRNA + NAD(+) = a uridine in mRNA + NADH + H(+). It carries out the reaction a 5,6-dihydrouridine in mRNA + NADP(+) = a uridine in mRNA + NADPH + H(+). Catalyzes the synthesis of dihydrouridine, a modified base, in various RNAs, such as tRNAs, mRNAs and some long non-coding RNAs (lncRNAs). Mainly modifies the uridine in position 47 (U47) in the D-loop of most cytoplasmic tRNAs. Also able to mediate the formation of dihydrouridine in some mRNAs, thereby regulating their translation. This chain is tRNA-dihydrouridine(47) synthase [NAD(P)(+)]-like, found in Rattus norvegicus (Rat).